We begin with the raw amino-acid sequence, 314 residues long: Deoxyhypusine hydroxylase (314 aa).

Methionine 1 is modified (N-acetylmethionine). HEAT-like PBS-type repeat units lie at residues 61–87 (LAHE…VLND), 94–120 (VRHE…SLSS), 188–214 (ERYA…SLSA), 219–245 (LRHE…VLRD), and 252–278 (VRHE…FSKD). Fe cation-binding residues include histidine 63, glutamate 64, histidine 96, and glutamate 97. Positions 221, 222, 254, and 255 each coordinate Fe cation.

Belongs to the deoxyhypusine hydroxylase family. Fe(2+) is required as a cofactor.

The catalysed reaction is [eIF5A protein]-deoxyhypusine + AH2 + O2 = [eIF5A protein]-hypusine + A + H2O. Its pathway is protein modification; eIF5A hypusination. Catalyzes the hydroxylation of the N(6)-(4-aminobutyl)-L-lysine intermediate to form hypusine, an essential post-translational modification only found in mature eIF-5A factor. The polypeptide is Deoxyhypusine hydroxylase (Arabidopsis thaliana (Mouse-ear cress)).